The primary structure comprises 160 residues: MTELCPVYAPFFGAIGCASAIIFTSLGAAYGTAKSGVGICATCVLRPDLLFKNIVPVIMAGIIAIYGLVVSVLVCYSLGQKQALYTGFIQLGAGLSVGLSGLAAGFAIGIVGDAGVRGSSQQPRLFVGMILILIFAEVLGLYGLIVALLLNSRATQDVVC.

Residues 1 to 8 are Vacuolar-facing; the sequence is MTELCPVY. The chain crosses the membrane as a helical span at residues 9-31; sequence APFFGAIGCASAIIFTSLGAAYG. The Cytoplasmic portion of the chain corresponds to 32-53; the sequence is TAKSGVGICATCVLRPDLLFKN. A helical membrane pass occupies residues 54–74; that stretch reads IVPVIMAGIIAIYGLVVSVLV. At 75-90 the chain is on the vacuolar side; sequence CYSLGQKQALYTGFIQ. A helical membrane pass occupies residues 91–112; that stretch reads LGAGLSVGLSGLAAGFAIGIVG. At 113-124 the chain is on the cytoplasmic side; sequence DAGVRGSSQQPR. The chain crosses the membrane as a helical span at residues 125–150; that stretch reads LFVGMILILIFAEVLGLYGLIVALLL. Topologically, residues 151–160 are vacuolar; sequence NSRATQDVVC.

The protein belongs to the V-ATPase proteolipid subunit family. In terms of assembly, V-ATPase is a heteromultimeric enzyme composed of a peripheral catalytic V1 complex (components A to H) attached to an integral membrane V0 proton pore complex (components: a, c, c', c'', d, e, f and VOA1). The decameric c-ring forms the proton-conducting pore, and is composed of eight proteolipid subunits c, one subunit c' and one subunit c''.

Its subcellular location is the vacuole membrane. In terms of biological role, proton-conducting pore forming subunit of the V0 complex of vacuolar(H+)-ATPase (V-ATPase), a multisubunit enzyme composed of a peripheral complex (V1) that hydrolyzes ATP and a membrane integral complex (V0) that translocates protons. V-ATPase is responsible for acidifying and maintaining the pH of intracellular compartments. This chain is V-type proton ATPase subunit c (VMA3), found in Saccharomyces cerevisiae (strain ATCC 204508 / S288c) (Baker's yeast).